Here is a 232-residue protein sequence, read N- to C-terminus: Flagellar L-ring protein (232 aa).

The N-terminal stretch at 1–21 (MQKYALHAYPVMALMVATLTG) is a signal peptide. C22 carries N-palmitoyl cysteine lipidation. C22 is lipidated: S-diacylglycerol cysteine.

This sequence belongs to the FlgH family. As to quaternary structure, the basal body constitutes a major portion of the flagellar organelle and consists of four rings (L,P,S, and M) mounted on a central rod.

Its subcellular location is the cell outer membrane. It localises to the bacterial flagellum basal body. Its function is as follows. Assembles around the rod to form the L-ring and probably protects the motor/basal body from shearing forces during rotation. The sequence is that of Flagellar L-ring protein from Salmonella gallinarum (strain 287/91 / NCTC 13346).